The primary structure comprises 212 residues: Uridine kinase (212 aa).

An ATP-binding site is contributed by G13–S20.

The protein belongs to the uridine kinase family.

Its subcellular location is the cytoplasm. The catalysed reaction is uridine + ATP = UMP + ADP + H(+). The enzyme catalyses cytidine + ATP = CMP + ADP + H(+). It functions in the pathway pyrimidine metabolism; CTP biosynthesis via salvage pathway; CTP from cytidine: step 1/3. It participates in pyrimidine metabolism; UMP biosynthesis via salvage pathway; UMP from uridine: step 1/1. In Shewanella halifaxensis (strain HAW-EB4), this protein is Uridine kinase.